The following is a 177-amino-acid chain: Protein-export protein SecB (177 aa).

The protein belongs to the SecB family. Homotetramer, a dimer of dimers. One homotetramer interacts with 1 SecA dimer.

It is found in the cytoplasm. In terms of biological role, one of the proteins required for the normal export of preproteins out of the cell cytoplasm. It is a molecular chaperone that binds to a subset of precursor proteins, maintaining them in a translocation-competent state. It also specifically binds to its receptor SecA. The chain is Protein-export protein SecB from Ehrlichia canis (strain Jake).